Reading from the N-terminus, the 621-residue chain is Intermediate filament protein ifc-2 (621 aa).

Residues 20-55 (SGAYTSGFGGLVSGMSSAGAICTTQIRDAREREKRE) are head. The region spanning 52–400 (EKREIGLLND…VLLNGANVTT (349 aa)) is the IF rod domain. The interval 56–87 (IGLLNDRLADYIEKVRFLEAQNQCLSHDIDIL) is coil 1A. Residues 88-100 (RRGFSGGGHVSGL) form a linker 1 region. Residues 101 to 238 (YDTEIAQAKR…TENSTRIEQE (138 aa)) are coil 1B. The tract at residues 239 to 256 (LVFIRRDTTAENRDYFRH) is linker 12. The interval 257 to 400 (ELQAAIRDIR…VLLNGANVTT (144 aa)) is coil 2. The tract at residues 401-549 (YVSNTHPSGV…RVDVGGFRVE (149 aa)) is tail. Residues 508-621 (SGRSFHSWYL…EERAWFVYLN (114 aa)) form the LTD domain.

Belongs to the intermediate filament family.

It localises to the cytoplasm. In terms of biological role, cytoplasmic intermediate filaments provide mechanical strength to cells. The chain is Intermediate filament protein ifc-2 from Caenorhabditis briggsae.